The sequence spans 192 residues: MDKFNINEKMKRTKIITTIGPSTHSPGAIEELFKTGMTTIRLNFSHGDHAEQGARIVWAREVSAKIGKPISVLLDTKGPEIHWRIKGLLQKSLNIYHQMNNSLMFSPSFCKFLHYHYTLLLSKKTKKQLLKIVKKLKKLQSQHYNLAHGLRETWTSSFCFNERPSIWRLLSSFKQIVTSFKISLVSKVLIKL.

R41 contacts substrate. 4 residues coordinate K(+): N43, S45, D75, and T76. 43 to 46 (NFSH) serves as a coordination point for ATP.

This sequence belongs to the pyruvate kinase family. Requires Mg(2+) as cofactor. K(+) serves as cofactor.

The enzyme catalyses pyruvate + ATP = phosphoenolpyruvate + ADP + H(+). Its pathway is carbohydrate degradation; glycolysis; pyruvate from D-glyceraldehyde 3-phosphate: step 5/5. This chain is Pyruvate kinase (pyk), found in Spiroplasma citri.